The following is a 189-amino-acid chain: UPF0312 protein VV2_0231 (189 aa).

The N-terminal stretch at 1 to 22 (MRKSVIATGLALMMAVPFAANA) is a signal peptide.

Belongs to the UPF0312 family. Type 1 subfamily.

The protein resides in the periplasm. The protein is UPF0312 protein VV2_0231 of Vibrio vulnificus (strain CMCP6).